A 550-amino-acid polypeptide reads, in one-letter code: Proteasome-associated ATPase (550 aa).

The stretch at 9-48 forms a coiled coil; the sequence is EELARRVASLSAQNERLAQILVEARSKIVGLQQQIDDLAQ. 233 to 238 serves as a coordination point for ATP; that stretch reads GCGKTL. The disordered stretch occupies residues 528–550; that stretch reads KGEGKNPTPAKAIETPHNTGPYL. The segment at 549-550 is docks into pockets in the proteasome alpha-ring; it reads YL.

Belongs to the AAA ATPase family. As to quaternary structure, homohexamer. Assembles into a hexameric ring structure that caps the 20S proteasome core. Strongly interacts with the prokaryotic ubiquitin-like protein Pup through a hydrophobic interface; the interacting region of ARC lies in its N-terminal coiled-coil domain. There is one Pup binding site per ARC hexamer ring. Upon ATP-binding, the C-terminus of ARC interacts with the alpha-rings of the proteasome core, possibly by binding to the intersubunit pockets.

Its pathway is protein degradation; proteasomal Pup-dependent pathway. ATPase which is responsible for recognizing, binding, unfolding and translocation of pupylated proteins into the bacterial 20S proteasome core particle. May be essential for opening the gate of the 20S proteasome via an interaction with its C-terminus, thereby allowing substrate entry and access to the site of proteolysis. Thus, the C-termini of the proteasomal ATPase may function like a 'key in a lock' to induce gate opening and therefore regulate proteolysis. The polypeptide is Proteasome-associated ATPase (Jonesia denitrificans (strain ATCC 14870 / DSM 20603 / BCRC 15368 / CIP 55.134 / JCM 11481 / NBRC 15587 / NCTC 10816 / Prevot 55134) (Listeria denitrificans)).